The chain runs to 142 residues: Small ribosomal subunit protein uS9 (142 aa).

It belongs to the universal ribosomal protein uS9 family.

The protein resides in the cytoplasm. In Syntrichia ruralis (Great hairy screw-moss), this protein is Small ribosomal subunit protein uS9 (RPS16).